Here is a 227-residue protein sequence, read N- to C-terminus: Phosphatidylserine decarboxylase proenzyme (227 aa).

Ser-184 functions as the Schiff-base intermediate with substrate; via pyruvic acid in the catalytic mechanism. Ser-184 is modified (pyruvic acid (Ser); by autocatalysis).

This sequence belongs to the phosphatidylserine decarboxylase family. PSD-A subfamily. Heterodimer of a large membrane-associated beta subunit and a small pyruvoyl-containing alpha subunit. Requires pyruvate as cofactor. Is synthesized initially as an inactive proenzyme. Formation of the active enzyme involves a self-maturation process in which the active site pyruvoyl group is generated from an internal serine residue via an autocatalytic post-translational modification. Two non-identical subunits are generated from the proenzyme in this reaction, and the pyruvate is formed at the N-terminus of the alpha chain, which is derived from the carboxyl end of the proenzyme. The post-translation cleavage follows an unusual pathway, termed non-hydrolytic serinolysis, in which the side chain hydroxyl group of the serine supplies its oxygen atom to form the C-terminus of the beta chain, while the remainder of the serine residue undergoes an oxidative deamination to produce ammonia and the pyruvoyl prosthetic group on the alpha chain.

The protein localises to the cell membrane. It carries out the reaction a 1,2-diacyl-sn-glycero-3-phospho-L-serine + H(+) = a 1,2-diacyl-sn-glycero-3-phosphoethanolamine + CO2. It participates in phospholipid metabolism; phosphatidylethanolamine biosynthesis; phosphatidylethanolamine from CDP-diacylglycerol: step 2/2. Its function is as follows. Catalyzes the formation of phosphatidylethanolamine (PtdEtn) from phosphatidylserine (PtdSer). This chain is Phosphatidylserine decarboxylase proenzyme, found in Ehrlichia ruminantium (strain Welgevonden).